Reading from the N-terminus, the 340-residue chain is DNA-directed RNA polymerase subunit alpha (340 aa).

Residues 1–236 (MLSLSKNWNT…EQLQLFIAFE (236 aa)) are alpha N-terminal domain (alpha-NTD). The segment at 251-340 (FSPYLLKRVD…LSKRYEDSYN (90 aa)) is alpha C-terminal domain (alpha-CTD).

The protein belongs to the RNA polymerase alpha chain family. As to quaternary structure, homodimer. The RNAP catalytic core consists of 2 alpha, 1 beta, 1 beta' and 1 omega subunit. When a sigma factor is associated with the core the holoenzyme is formed, which can initiate transcription.

The catalysed reaction is RNA(n) + a ribonucleoside 5'-triphosphate = RNA(n+1) + diphosphate. Its function is as follows. DNA-dependent RNA polymerase catalyzes the transcription of DNA into RNA using the four ribonucleoside triphosphates as substrates. The protein is DNA-directed RNA polymerase subunit alpha of Rickettsia prowazekii (strain Madrid E).